Reading from the N-terminus, the 261-residue chain is UPF0328 protein ECU06_0100 (261 aa).

Belongs to the UPF0328 family.

This is UPF0328 protein ECU06_0100 from Encephalitozoon cuniculi (strain GB-M1) (Microsporidian parasite).